The primary structure comprises 315 residues: Ribosomal protein L11 methyltransferase (315 aa).

S-adenosyl-L-methionine is bound by residues Thr164, Gly185, Asp207, and Asn250.

This sequence belongs to the methyltransferase superfamily. PrmA family.

Its subcellular location is the cytoplasm. The enzyme catalyses L-lysyl-[protein] + 3 S-adenosyl-L-methionine = N(6),N(6),N(6)-trimethyl-L-lysyl-[protein] + 3 S-adenosyl-L-homocysteine + 3 H(+). In terms of biological role, methylates ribosomal protein L11. The chain is Ribosomal protein L11 methyltransferase from Exiguobacterium sibiricum (strain DSM 17290 / CCUG 55495 / CIP 109462 / JCM 13490 / 255-15).